Consider the following 331-residue polypeptide: NAD-dependent protein deacetylase HST2 (331 aa).

The Deacetylase sirtuin-type domain maps to methionine 1 to aspartate 262. Residues glycine 26 to tyrosine 46 and glutamine 109 to aspartate 112 contribute to the NAD(+) site. The active-site Proton acceptor is histidine 129. Zn(2+) contacts are provided by cysteine 137, cysteine 140, cysteine 161, and cysteine 164. NAD(+) contacts are provided by residues glycine 201 to serine 203, asparagine 226 to glutamate 228, and cysteine 248. Residues tyrosine 276–isoleucine 331 adopt a coiled-coil conformation. The disordered stretch occupies residues glutamate 283–aspartate 319.

Belongs to the sirtuin family. Class I subfamily. The cofactor is Zn(2+).

Its subcellular location is the cytoplasm. The protein resides in the nucleus. It carries out the reaction N(6)-acetyl-L-lysyl-[protein] + NAD(+) + H2O = 2''-O-acetyl-ADP-D-ribose + nicotinamide + L-lysyl-[protein]. Its function is as follows. NAD-dependent histone deacetylase that is involved in nuclear silencing events. Derepresses subtelomeric silencing and increases repression in nucleolar (rDNA) silencing. Its function is negatively regulated by active nuclear export. This is NAD-dependent protein deacetylase HST2 (HST2) from Candida albicans (strain SC5314 / ATCC MYA-2876) (Yeast).